A 235-amino-acid chain; its full sequence is Ribonuclease PH (235 aa).

Phosphate-binding positions include R86 and 124–126 (GTR).

Belongs to the RNase PH family. In terms of assembly, homohexameric ring arranged as a trimer of dimers.

It carries out the reaction tRNA(n+1) + phosphate = tRNA(n) + a ribonucleoside 5'-diphosphate. Phosphorolytic 3'-5' exoribonuclease that plays an important role in tRNA 3'-end maturation. Removes nucleotide residues following the 3'-CCA terminus of tRNAs; can also add nucleotides to the ends of RNA molecules by using nucleoside diphosphates as substrates, but this may not be physiologically important. Probably plays a role in initiation of 16S rRNA degradation (leading to ribosome degradation) during starvation. In Francisella tularensis subsp. novicida (strain U112), this protein is Ribonuclease PH.